The following is a 193-amino-acid chain: Protein TEX261 (193 aa).

5 consecutive transmembrane segments (helical) span residues 1–21, 39–59, 67–87, 94–114, and 122–142; these read MVGV…PPPA, SRII…LYVF, IGVG…FPFI, FILS…FFAE, and VLAY…VSLS.

This sequence belongs to the SVP26 family.

It localises to the membrane. The polypeptide is Protein TEX261 (TEX261) (Bos taurus (Bovine)).